The primary structure comprises 232 residues: 2-C-methyl-D-erythritol 4-phosphate cytidylyltransferase (232 aa).

The protein belongs to the IspD/TarI cytidylyltransferase family. IspD subfamily.

The enzyme catalyses 2-C-methyl-D-erythritol 4-phosphate + CTP + H(+) = 4-CDP-2-C-methyl-D-erythritol + diphosphate. It functions in the pathway isoprenoid biosynthesis; isopentenyl diphosphate biosynthesis via DXP pathway; isopentenyl diphosphate from 1-deoxy-D-xylulose 5-phosphate: step 2/6. Its function is as follows. Catalyzes the formation of 4-diphosphocytidyl-2-C-methyl-D-erythritol from CTP and 2-C-methyl-D-erythritol 4-phosphate (MEP). The polypeptide is 2-C-methyl-D-erythritol 4-phosphate cytidylyltransferase (Deinococcus radiodurans (strain ATCC 13939 / DSM 20539 / JCM 16871 / CCUG 27074 / LMG 4051 / NBRC 15346 / NCIMB 9279 / VKM B-1422 / R1)).